The primary structure comprises 863 residues: Glycogen phosphorylase (863 aa).

Lys618 carries the post-translational modification N6-(pyridoxal phosphate)lysine.

The protein belongs to the glycogen phosphorylase family. Requires pyridoxal 5'-phosphate as cofactor.

The catalysed reaction is [(1-&gt;4)-alpha-D-glucosyl](n) + phosphate = [(1-&gt;4)-alpha-D-glucosyl](n-1) + alpha-D-glucose 1-phosphate. Phosphorylase is an important allosteric enzyme in carbohydrate metabolism. Enzymes from different sources differ in their regulatory mechanisms and in their natural substrates. However, all known phosphorylases share catalytic and structural properties. In Mycobacterium tuberculosis (strain ATCC 25618 / H37Rv), this protein is Glycogen phosphorylase (glgP).